A 360-amino-acid chain; its full sequence is Phenylalanine--tRNA ligase alpha subunit (360 aa).

Glutamate 260 contributes to the Mg(2+) binding site.

The protein belongs to the class-II aminoacyl-tRNA synthetase family. Phe-tRNA synthetase alpha subunit type 1 subfamily. As to quaternary structure, tetramer of two alpha and two beta subunits. Requires Mg(2+) as cofactor.

The protein localises to the cytoplasm. The enzyme catalyses tRNA(Phe) + L-phenylalanine + ATP = L-phenylalanyl-tRNA(Phe) + AMP + diphosphate + H(+). This is Phenylalanine--tRNA ligase alpha subunit from Afipia carboxidovorans (strain ATCC 49405 / DSM 1227 / KCTC 32145 / OM5) (Oligotropha carboxidovorans).